Consider the following 238-residue polypeptide: MQYSPNLAHGTLLRRYKRFLADVLLDDGTEITLHCPNTGSMKNCLFPGETVWFSTSNNPKRKYAHTWEQSSTPDKQLIGINTGRANALAEEAINLGVIKELTGYDRLQREVKYGEENSRIDILLSSDTRASCYIEVKSCTLLEEGSTSGRGYFPDSVTVRGQKHLRELIHMVKQGHRAVLLFVVQHSGINSVSPARHIDVAYSELFTQALDAGVEVLAYQTQMSPQESQILTSCPVIT.

The protein belongs to the SfsA family.

The polypeptide is Sugar fermentation stimulation protein homolog (Shewanella denitrificans (strain OS217 / ATCC BAA-1090 / DSM 15013)).